The chain runs to 207 residues: Large ribosomal subunit protein uL4 (207 aa).

The protein belongs to the universal ribosomal protein uL4 family. As to quaternary structure, part of the 50S ribosomal subunit.

One of the primary rRNA binding proteins, this protein initially binds near the 5'-end of the 23S rRNA. It is important during the early stages of 50S assembly. It makes multiple contacts with different domains of the 23S rRNA in the assembled 50S subunit and ribosome. In terms of biological role, forms part of the polypeptide exit tunnel. This is Large ribosomal subunit protein uL4 from Geobacter metallireducens (strain ATCC 53774 / DSM 7210 / GS-15).